The sequence spans 214 residues: Alpha-S1-casein (214 aa).

A signal peptide spans 1–15 (MKLLILTCLVAVALA). Phosphoserine occurs at positions 63, 79, 81, 82, 83, and 90. Repeats lie at residues 85–99 (EIVP…IQKE) and 125–140 (EIVP…SMKE).

Belongs to the alpha-casein family. Mammary gland specific. Secreted in milk.

The protein resides in the secreted. Functionally, important role in the capacity of milk to transport calcium phosphate. In Bubalus bubalis (Domestic water buffalo), this protein is Alpha-S1-casein (CSN1S1).